Consider the following 263-residue polypeptide: Putative TATA-binding protein pB263R (263 aa).

This sequence belongs to the asfivirus B263R family.

Functionally, putative TATA-binding protein. The protein is Putative TATA-binding protein pB263R of African swine fever virus (isolate Tick/Malawi/Lil 20-1/1983) (ASFV).